The primary structure comprises 327 residues: Probable cell division protein WhiA (327 aa).

The H-T-H motif DNA-binding region spans 275 to 308; that stretch reads SLEELGRLADPQMTKDAVAGRIRRLLTMADKRAE.

Belongs to the WhiA family.

Functionally, involved in cell division and chromosome segregation. This chain is Probable cell division protein WhiA, found in Corynebacterium glutamicum (strain R).